A 1046-amino-acid polypeptide reads, in one-letter code: UDP-N-acetylglucosamine--peptide N-acetylglucosaminyltransferase 110 kDa subunit (1046 aa).

An N-acetylalanine modification is found at A2. S3 and S4 each carry phosphoserine; by GSK3-beta; alternate. O-linked (GlcNAc) serine; alternate glycosylation is found at S3 and S4. D10 carries O-linked (GlcNAc) serine glycosylation. T12 carries O-linked (GlcNAc) threonine glycosylation. M18 is a glycosylation site (O-linked (GlcNAc) serine). Position 20 is a phosphoserine (S20). The stretch at F21 to N54 is one TPR 1 repeat. A glycan (O-linked (GlcNAc) threonine) is linked at E38. Residues P52 and G56 are each glycosylated (O-linked (GlcNAc) serine). TPR repeat units follow at residues A89–F122, I123–L156, Y157–F190, A191–F224, L225–H258, A259–F292, P293–H326, A327–F360, A361–F394, A395–F428, and A429–F462. The O-linked (GlcNAc) serine; by autocatalysis glycan is linked to S399. At T454 the chain carries Phosphothreonine; by AMPK. One copy of the TPR 13; truncated repeat lies at P463–L473. Positions D464 to Y466 match the DFP motif motif. A Nuclear localization signal motif is present at residues K487–P503. H508 (proton acceptor) is an active-site residue. UDP contacts are provided by residues Q849, K852, A906–K908, H911–R914, H930–T932, and D935. Y989 carries the phosphotyrosine modification. A required for phosphatidylinositol 3,4,5-triphosphate binding region spans residues K991–K1010.

It belongs to the glycosyltransferase 41 family. O-GlcNAc transferase subfamily. As to quaternary structure, monomer; may exist in different oligomerization states in cells. Homotrimer, oligomerizes via TPR repeats 6 and 7. Trimerization is not necessary for activity in vitro, however it increases affinity for UDP-GlcNAc. Component of a THAP1/THAP3-HCFC1-OGT complex. Component of the NSL complex at least composed of MOF/KAT8, KANSL1, KANSL2, KANSL3, MCRS1, PHF20, OGT1/OGT, WDR5 and HCFC1. Found in a complex with KIF5B, RHOT1, RHOT2 and TRAK1. Found in a complex composed of at least SINHCAF, SIN3A, HDAC1, SAP30, RBBP4, OGT and TET1. Component of a complex composed of KMT2E/MLL5 (isoform 3), OGT (isoform 1) and USP7; the complex stabilizes KMT2E/MLL5, preventing KMT2E/MLL5 ubiquitination and proteasomal-mediated degradation. Interacts (via TPRs 1-6) with SIN3A; the interaction mediates transcriptional repression in parallel with histone deacetylase. Interacts (via TPR 5-6) with TET1, TET2 and TET3. Interacts (via TPR repeats 6 and 7) with ATXN10. Interacts with NSD2. Interacts with PROSER1; this interaction mediates TET2 O-GlcNAcylation and stability by promoting the interaction between OGT and TET2. In terms of assembly, interacts with USP7. (Microbial infection) Interacts with human T-cell leukemia virus 1/HTLV-1 protein Tax; this interaction increases Tax interacting partner CREB1 O-GlcNAcylation. Post-translationally, ubiquitinated by the SCF(FBXO31) complex, leading to its proteasomal degradation. In terms of processing, phosphorylation on Ser-3 or Ser-4 by GSK3-beta positively regulates its activity. Phosphorylation at Thr-454 by AMPK promotes nuclear localization. Glycosylated via autocatalysis; O-GlcNAcylation at Ser-399 promotes nuclear localization. Post-translationally, glycosylated via autocatalysis; does not affect the enzyme activity but regulates substrate selectivity. Highly expressed in pancreas and to a lesser extent in skeletal muscle, heart, brain and placenta. Present in trace amounts in lung and liver.

The protein resides in the nucleus. It localises to the cytoplasm. The protein localises to the mitochondrion. Its subcellular location is the membrane. It is found in the cell membrane. The protein resides in the mitochondrion membrane. It localises to the cell projection. It carries out the reaction L-seryl-[protein] + UDP-N-acetyl-alpha-D-glucosamine = 3-O-(N-acetyl-beta-D-glucosaminyl)-L-seryl-[protein] + UDP + H(+). It catalyses the reaction L-threonyl-[protein] + UDP-N-acetyl-alpha-D-glucosamine = 3-O-(N-acetyl-beta-D-glucosaminyl)-L-threonyl-[protein] + UDP + H(+). The protein operates within protein modification; protein glycosylation. Its activity is regulated as follows. Subject to product inhibition by UDP. Functionally, catalyzes the transfer of a single N-acetylglucosamine from UDP-GlcNAc to a serine or threonine residue in cytoplasmic and nuclear proteins resulting in their modification with a beta-linked N-acetylglucosamine (O-GlcNAc). Glycosylates a large and diverse number of proteins including histone H2B, AKT1, AMPK, ATG4B, CAPRIN1, EZH2, FNIP1, GSDMD, KRT7, LMNA, LMNB1, LMNB2, RPTOR, HOXA1, PFKL, KMT2E/MLL5, MAPT/TAU, TET2, RBL2, RET, NOD2 and HCFC1. Can regulate their cellular processes via cross-talk between glycosylation and phosphorylation or by affecting proteolytic processing. Involved in insulin resistance in muscle and adipocyte cells via glycosylating insulin signaling components and inhibiting the 'Thr-308' phosphorylation of AKT1, enhancing IRS1 phosphorylation and attenuating insulin signaling. Involved in glycolysis regulation by mediating glycosylation of 6-phosphofructokinase PFKL, inhibiting its activity. Plays a key role in chromatin structure by mediating O-GlcNAcylation of 'Ser-112' of histone H2B: recruited to CpG-rich transcription start sites of active genes via its interaction with TET proteins (TET1, TET2 or TET3). As part of the NSL complex indirectly involved in acetylation of nucleosomal histone H4 on several lysine residues. O-GlcNAcylation of 'Ser-75' of EZH2 increases its stability, and facilitating the formation of H3K27me3 by the PRC2/EED-EZH2 complex. Stabilizes KMT2E/MLL5 by mediating its glycosylation, thereby preventing KMT2E/MLL5 ubiquitination. Regulates circadian oscillation of the clock genes and glucose homeostasis in the liver. Stabilizes clock proteins BMAL1 and CLOCK through O-glycosylation, which prevents their ubiquitination and subsequent degradation. Promotes the CLOCK-BMAL1-mediated transcription of genes in the negative loop of the circadian clock such as PER1/2 and CRY1/2. O-glycosylates HCFC1 and regulates its proteolytic processing and transcriptional activity. Component of a THAP1/THAP3-HCFC1-OGT complex that is required for the regulation of the transcriptional activity of RRM1. Regulates mitochondrial motility in neurons by mediating glycosylation of TRAK1. Promotes autophagy by mediating O-glycosylation of ATG4B. Acts as a regulator of mTORC1 signaling by mediating O-glycosylation of RPTOR and FNIP1: O-GlcNAcylation of RPTOR in response to glucose sufficiency promotes activation of the mTORC1 complex. Its function is as follows. The mitochondrial isoform (mOGT) is cytotoxic and triggers apoptosis in several cell types including INS1, an insulinoma cell line. Has N-acetylglucosaminyltransferase activity: glycosylates proteins, such as HNRNPU, NEUROD1, NUP62 and PDCD6IP. Displays specific substrate selectivity compared to other isoforms. The sequence is that of UDP-N-acetylglucosamine--peptide N-acetylglucosaminyltransferase 110 kDa subunit from Homo sapiens (Human).